A 1901-amino-acid polypeptide reads, in one-letter code: A-kinase anchor protein 11 (1901 aa).

Phosphoserine occurs at positions 18, 422, 433, 444, and 448. The interval Ala407–Asp443 is disordered. 2 disordered regions span residues Asn843 to Lys864 and Leu971 to Asn993. Residues Thr981 and Thr1100 each carry the phosphothreonine modification. The segment at Glu1131–Glu1153 is disordered. Positions Pro1141 to Glu1153 are enriched in polar residues. Residues Ser1171, Ser1176, Ser1177, Ser1242, and Ser1337 each carry the phosphoserine modification. Position 1485 is a phosphothreonine (Thr1485). Ser1580 carries the phosphoserine modification. The tract at residues Leu1650–Glu1663 is PKA-RII subunit binding domain. The disordered stretch occupies residues Lys1708–Gln1805. Residues Phe1713 to Ser1740 show a composition bias toward polar residues. The segment covering Asp1747 to Ser1756 has biased composition (basic and acidic residues). Positions Glu1757 to Gly1772 are enriched in low complexity. Over residues Asp1787–Glu1801 the composition is skewed to acidic residues.

The protein belongs to the AKAP110 family. Expressed in heart, brain, lung, liver, kidney, testis and ovary. Weakly expressed in skeletal muscle, pancreas and spleen.

The protein resides in the cytoplasm. It localises to the cytoskeleton. It is found in the microtubule organizing center. Its subcellular location is the centrosome. Functionally, binds to type II regulatory subunits of protein kinase A and anchors/targets them. This Homo sapiens (Human) protein is A-kinase anchor protein 11 (AKAP11).